We begin with the raw amino-acid sequence, 468 residues long: Glutamate--tRNA ligase (468 aa).

The 'HIGH' region signature appears at 9-19 (PSPTGSIHIGN). A 'KMSKS' region motif is present at residues 239 to 243 (KLSKR). Lys242 contacts ATP.

The protein belongs to the class-I aminoacyl-tRNA synthetase family. Glutamate--tRNA ligase type 1 subfamily. As to quaternary structure, monomer.

It localises to the cytoplasm. The catalysed reaction is tRNA(Glu) + L-glutamate + ATP = L-glutamyl-tRNA(Glu) + AMP + diphosphate. Catalyzes the attachment of glutamate to tRNA(Glu) in a two-step reaction: glutamate is first activated by ATP to form Glu-AMP and then transferred to the acceptor end of tRNA(Glu). The protein is Glutamate--tRNA ligase of Blochmanniella pennsylvanica (strain BPEN).